Reading from the N-terminus, the 1326-residue chain is Putative late blight resistance protein homolog R1B-19 (1326 aa).

Coiled-coil stretches lie at residues 421–444 (RYSD…ESLQ) and 536–558 (PRMK…KLLN). 570 to 577 (GMPGLGKT) contributes to the ATP binding site. The NB-ARC domain maps to 611–864 (LLSLLCDTIG…KVKTCRLHDV (254 aa)). The stretch at 749 to 770 (SEMEKEVECWEQVANNLGTRIH) forms a coiled coil. 9 LRR repeats span residues 953 to 978 (FKFL…VYLK), 980 to 996 (FSAH…IYNL), 1027 to 1050 (LRHL…SAKL), 1053 to 1070 (LETL…LNFP), 1071 to 1094 (IRLE…ISAP), 1098 to 1118 (YLKL…ADHL), 1119 to 1146 (KNLE…MFPQ), 1167 to 1191 (FPNL…AMNI), and 1208 to 1230 (LIEK…AFKR). The HMA domain occupies 1209-1278 (IEKKTLKLNL…AWHARVVVPT (70 aa)).

This sequence belongs to the disease resistance NB-LRR family.

It localises to the cytoplasm. Its subcellular location is the membrane. In terms of biological role, confers resistance to late blight (Phytophthora infestans) races carrying the avirulence gene Avr1. Resistance proteins guard the plant against pathogens that contain an appropriate avirulence protein via an indirect interaction with this avirulence protein. That triggers a defense system including the hypersensitive response, which restricts the pathogen growth. This is Putative late blight resistance protein homolog R1B-19 (R1B-19) from Solanum demissum (Wild potato).